We begin with the raw amino-acid sequence, 236 residues long: Leucyl/phenylalanyl-tRNA--protein transferase (236 aa).

The protein belongs to the L/F-transferase family.

The protein localises to the cytoplasm. It carries out the reaction N-terminal L-lysyl-[protein] + L-leucyl-tRNA(Leu) = N-terminal L-leucyl-L-lysyl-[protein] + tRNA(Leu) + H(+). The enzyme catalyses N-terminal L-arginyl-[protein] + L-leucyl-tRNA(Leu) = N-terminal L-leucyl-L-arginyl-[protein] + tRNA(Leu) + H(+). The catalysed reaction is L-phenylalanyl-tRNA(Phe) + an N-terminal L-alpha-aminoacyl-[protein] = an N-terminal L-phenylalanyl-L-alpha-aminoacyl-[protein] + tRNA(Phe). In terms of biological role, functions in the N-end rule pathway of protein degradation where it conjugates Leu, Phe and, less efficiently, Met from aminoacyl-tRNAs to the N-termini of proteins containing an N-terminal arginine or lysine. This Shewanella sp. (strain MR-7) protein is Leucyl/phenylalanyl-tRNA--protein transferase.